Reading from the N-terminus, the 22-residue chain is thr operon leader peptide (22 aa).

It belongs to the thr operon leader peptide family.

In terms of biological role, this protein is involved in control of the biosynthesis of threonine. In Yersinia enterocolitica serotype O:8 / biotype 1B (strain NCTC 13174 / 8081), this protein is thr operon leader peptide.